A 3210-amino-acid polypeptide reads, in one-letter code: PF 1022-synthetase (3210 aa).

The condensation 1 stretch occupies residues V68–E454. Residues A483 to R876 form an adenylation 1 region. The 77-residue stretch at A1010–P1086 folds into the Carrier 1 domain. S1047 carries the post-translational modification O-(pantetheine 4'-phosphoryl)serine. Positions S1104–T1534 are condensation 2. The segment at F1563–R2023 is adenylation 2. The segment at E2081–V2236 is S-adenosyl-L-methionine-dependent N-methyltransferase. Carrier domains lie at D2570–L2644 and T2668–Q2742. An O-(pantetheine 4'-phosphoryl)serine mark is found at S2604 and S2702. The condensation 3 stretch occupies residues L2788–N3203. Positions V2976–S3002 are disordered.

Belongs to the NRP synthetase family. Requires pantetheine 4'-phosphate as cofactor.

The catalysed reaction is 2 (R)-3-phenyllactate + 2 (R)-lactate + 4 L-leucine + 4 S-adenosyl-L-methionine + 8 ATP = PF1022A + 8 AMP + 4 S-adenosyl-L-homocysteine + 8 diphosphate + 8 H(+). It catalyses the reaction 4 (R)-3-phenyllactate + 4 L-leucine + 4 S-adenosyl-L-methionine + 8 ATP = PF1022B + 8 AMP + 4 S-adenosyl-L-homocysteine + 8 diphosphate + 8 H(+). The enzyme catalyses 3 (R)-3-phenyllactate + (R)-lactate + 4 L-leucine + 4 S-adenosyl-L-methionine + 8 ATP = PF1022C + 8 AMP + 4 S-adenosyl-L-homocysteine + 8 diphosphate + 8 H(+). It carries out the reaction (R)-3-phenyllactate + 3 (R)-lactate + 4 L-leucine + 4 S-adenosyl-L-methionine + 8 ATP = PF1022D + 8 AMP + 4 S-adenosyl-L-homocysteine + 8 diphosphate + 8 H(+). The catalysed reaction is 4 (R)-lactate + 4 L-leucine + 4 S-adenosyl-L-methionine + 8 ATP = PF1022F + 8 AMP + 4 S-adenosyl-L-homocysteine + 8 diphosphate + 8 H(+). In terms of biological role, nonribosomal peptide synthetase that synthesizes cyclooctadepsipeptides (CODPs) PF 1022 that show powerful broad-spectrum anthelmintic activity with low toxicity in animals. Couples 4 N-methyl-L-leucines and a varying content of alpha-D-hydroxy acids (D-lactates or D-phenyllactates) in an alternative fashion. The enzyme is capable of synthesizing all known natural cyclooctadepsipeptides of the PF1022 type differing in the content of D-lactate and D-phenyllactate, using from 4 D-lactates (PF 1022F) to 4 D-phenyllactates (PF 1022B), respectively. The formation of different PF-related compounds is mainly controlled by the molar ratio of the hydroxy acids. N-methylation of the substrate L-leucine takes place after covalent binding prior to peptide bond formation. This is PF 1022-synthetase from Rosellinia sp. (Mycelia sterilia).